The chain runs to 355 residues: Peptide chain release factor 1 (355 aa).

Gln230 carries the N5-methylglutamine modification.

It belongs to the prokaryotic/mitochondrial release factor family. Post-translationally, methylated by PrmC. Methylation increases the termination efficiency of RF1.

The protein resides in the cytoplasm. Peptide chain release factor 1 directs the termination of translation in response to the peptide chain termination codons UAG and UAA. The protein is Peptide chain release factor 1 of Geotalea uraniireducens (strain Rf4) (Geobacter uraniireducens).